A 186-amino-acid polypeptide reads, in one-letter code: Bis(5'-nucleosyl)-tetraphosphatase, symmetrical (186 aa).

The HD domain maps to 18 to 132 (RYIHTVGVMN…IYVADYIEPN (115 aa)). His-21 provides a ligand contact to ADP. His-21, His-50, and Asp-51 together coordinate Fe cation. ADP-binding positions include 51-54 (DYAK), His-83, 109-110 (HT), Asp-127, Arg-133, and 170-175 (PVFPDT). Asp-127 is a Fe cation binding site.

This sequence belongs to the Ap4A hydrolase YqeK family. As to quaternary structure, homodimer.

It carries out the reaction P(1),P(4)-bis(5'-adenosyl) tetraphosphate + H2O = 2 ADP + 2 H(+). Functionally, hydrolyzes diadenosine 5',5'''-P1,P4-tetraphosphate (Ap4A) to yield ADP. This chain is Bis(5'-nucleosyl)-tetraphosphatase, symmetrical (yqeK), found in Bacillus subtilis (strain 168).